The chain runs to 168 residues: ATP synthase subunit b (168 aa).

The chain crosses the membrane as a helical span at residues 9–29 (AIPFGTIAYTLFIFLLLLVML).

It belongs to the ATPase B chain family. In terms of assembly, F-type ATPases have 2 components, F(1) - the catalytic core - and F(0) - the membrane proton channel. F(1) has five subunits: alpha(3), beta(3), gamma(1), delta(1), epsilon(1). F(0) has three main subunits: a(1), b(2) and c(10-14). The alpha and beta chains form an alternating ring which encloses part of the gamma chain. F(1) is attached to F(0) by a central stalk formed by the gamma and epsilon chains, while a peripheral stalk is formed by the delta and b chains.

The protein localises to the cell membrane. F(1)F(0) ATP synthase produces ATP from ADP in the presence of a proton or sodium gradient. F-type ATPases consist of two structural domains, F(1) containing the extramembraneous catalytic core and F(0) containing the membrane proton channel, linked together by a central stalk and a peripheral stalk. During catalysis, ATP synthesis in the catalytic domain of F(1) is coupled via a rotary mechanism of the central stalk subunits to proton translocation. In terms of biological role, component of the F(0) channel, it forms part of the peripheral stalk, linking F(1) to F(0). The protein is ATP synthase subunit b of Bacillus thuringiensis (strain Al Hakam).